A 204-amino-acid chain; its full sequence is Terpene cyclase ausL (204 aa).

5 helical membrane passes run 19–39, 49–69, 75–95, 114–134, and 138–158; these read LSEM…LAMV, AIAV…AWIY, HWQG…AATL, LVLL…CLAL, and GALG…SAAV.

This sequence belongs to the paxB family.

The protein localises to the membrane. The protein operates within secondary metabolite biosynthesis; terpenoid biosynthesis. Its function is as follows. Terpene cyclase; part of the gene cluster B that mediates the biosynthesis of austinol and dehydroaustinol, two fungal meroterpenoids. The first step of the pathway is the synthesis of 3,5-dimethylorsellinic acid by the polyketide synthase ausA. 3,5-dimethylorsellinic acid is then prenylated by the polyprenyl transferase ausN. Further epoxidation by the FAD-dependent monooxygenase ausM and cyclization by the probable terpene cyclase ausL lead to the formation of protoaustinoid A. Protoaustinoid A is then oxidized to spiro-lactone preaustinoid A3 by the combined action of the FAD-binding monooxygenases ausB and ausC, and the dioxygenase ausE. Acid-catalyzed keto-rearrangement and ring contraction of the tetraketide portion of preaustinoid A3 by ausJ lead to the formation of preaustinoid A4. The aldo-keto reductase ausK, with the help of ausH, is involved in the next step by transforming preaustinoid A4 into isoaustinone which is in turn hydroxylated by the P450 monooxygenase ausI to form austinolide. Finally, the cytochrome P450 monooxygenase ausG modifies austinolide to austinol. Austinol can be further modified to dehydroaustinol which forms a diffusible complex with diorcinol that initiates conidiation. Due to genetic rearrangements of the clusters and the subsequent loss of some enzymes, the end products of the Emericella nidulans austinoid biosynthesis clusters are austinol and dehydroaustinol, even if additional enzymes, such as the O-acetyltransferase ausQ and the cytochrome P450 monooxygenase ausR are still functional. The chain is Terpene cyclase ausL from Emericella nidulans (strain FGSC A4 / ATCC 38163 / CBS 112.46 / NRRL 194 / M139) (Aspergillus nidulans).